Consider the following 451-residue polypeptide: uncharacterized protein (451 aa).

Residues 2–60 enclose the TRAM domain; that stretch reads VVKVKQKIPLKIKRMGINGEGIGFYQKTLVFVPGALKGENIFCQITAVKRNFAEAKLLT. [4Fe-4S] cluster contacts are provided by C73, C79, C82, and C162. Residues Q283, Y312, D333, and D381 each coordinate S-adenosyl-L-methionine. C408 (nucleophile) is an active-site residue.

This sequence belongs to the class I-like SAM-binding methyltransferase superfamily. RNA M5U methyltransferase family.

This is an uncharacterized protein from Streptococcus pyogenes serotype M3 (strain ATCC BAA-595 / MGAS315).